The sequence spans 246 residues: 4-hydroxy-tetrahydrodipicolinate reductase (246 aa).

NAD(+)-binding positions include 7–12 (GATGRT), 84–86 (GTT), and 108–111 (ASNF). Histidine 140 serves as the catalytic Proton donor/acceptor. Histidine 141 is a (S)-2,3,4,5-tetrahydrodipicolinate binding site. The Proton donor role is filled by lysine 144. 150–151 (GT) is a binding site for (S)-2,3,4,5-tetrahydrodipicolinate.

Belongs to the DapB family.

It localises to the cytoplasm. The enzyme catalyses (S)-2,3,4,5-tetrahydrodipicolinate + NAD(+) + H2O = (2S,4S)-4-hydroxy-2,3,4,5-tetrahydrodipicolinate + NADH + H(+). It carries out the reaction (S)-2,3,4,5-tetrahydrodipicolinate + NADP(+) + H2O = (2S,4S)-4-hydroxy-2,3,4,5-tetrahydrodipicolinate + NADPH + H(+). It participates in amino-acid biosynthesis; L-lysine biosynthesis via DAP pathway; (S)-tetrahydrodipicolinate from L-aspartate: step 4/4. Functionally, catalyzes the conversion of 4-hydroxy-tetrahydrodipicolinate (HTPA) to tetrahydrodipicolinate. This is 4-hydroxy-tetrahydrodipicolinate reductase from Natronomonas pharaonis (strain ATCC 35678 / DSM 2160 / CIP 103997 / JCM 8858 / NBRC 14720 / NCIMB 2260 / Gabara) (Halobacterium pharaonis).